Here is a 197-residue protein sequence, read N- to C-terminus: Auxin-responsive protein IAA19 (197 aa).

The EAR-like (transcriptional repression) motif lies at 13–17 (LRLGL). The span at 35–47 (MNMTSSGSNSDQC) shows a compositional bias: polar residues. Residues 35 to 67 (MNMTSSGSNSDQCESGVVSSGGDAEKVNDSPAA) are disordered. In terms of domain architecture, PB1 spans 96-184 (LGYVKVSMDG…KRLRIMKRSD (89 aa)).

The protein belongs to the Aux/IAA family. In terms of assembly, homodimers and heterodimers. Interacts with the auxin response factor ARF7.

The protein resides in the nucleus. Functionally, aux/IAA proteins are short-lived transcriptional factors that function as repressors of early auxin response genes at low auxin concentrations. Repression is thought to result from the interaction with auxin response factors (ARFs), proteins that bind to the auxin-responsive promoter element (AuxRE). Formation of heterodimers with ARF proteins may alter their ability to modulate early auxin response genes expression. This Arabidopsis thaliana (Mouse-ear cress) protein is Auxin-responsive protein IAA19 (IAA19).